A 617-amino-acid polypeptide reads, in one-letter code: Putative type VI secretion system protein VgrGB (617 aa).

Residues 449-469 (RTFHATNPSPYPLPASKTRTS) are disordered.

Belongs to the VgrG protein family.

Its function is as follows. A Vgr protein that is probably part of a type VI secretion system (T6SS). May be required for export of proteins involved in Rhs-mediated cellular contact-dependent growth inhibition (CDI). This Dickeya dadantii (strain 3937) (Erwinia chrysanthemi (strain 3937)) protein is Putative type VI secretion system protein VgrGB (vgrGB).